A 639-amino-acid chain; its full sequence is Sec1 family domain-containing protein 1 (639 aa).

A phosphoserine mark is found at Ser-34, Ser-300, and Ser-525.

This sequence belongs to the STXBP/unc-18/SEC1 family. In terms of assembly, interacts with STX17. Interacts with STX5A. Interacts with the COG complex via COG4.

It localises to the cytoplasm. It is found in the endoplasmic reticulum membrane. The protein resides in the golgi apparatus. The protein localises to the golgi stack membrane. In terms of biological role, plays a role in SNARE-pin assembly and Golgi-to-ER retrograde transport via its interaction with COG4. Involved in vesicular transport between the endoplasmic reticulum and the Golgi. The protein is Sec1 family domain-containing protein 1 (Scfd1) of Mus musculus (Mouse).